The sequence spans 128 residues: Nascent polypeptide-associated complex protein (128 aa).

One can recognise an NAC-A/B domain in the interval 8 to 75; it reads PRMLKKMQKM…PKKIKKEKVE (68 aa).

The protein belongs to the NAC-alpha family. Homodimer. Interacts with the ribosome. Binds ribosomal RNA.

Contacts the emerging nascent chain on the ribosome. This chain is Nascent polypeptide-associated complex protein, found in Methanocaldococcus jannaschii (strain ATCC 43067 / DSM 2661 / JAL-1 / JCM 10045 / NBRC 100440) (Methanococcus jannaschii).